We begin with the raw amino-acid sequence, 338 residues long: Lipoate-protein ligase A (338 aa).

The region spanning 29–216 (PATQRVLFLW…AFFAHYGERV (188 aa)) is the BPL/LPL catalytic domain. Residues Arg-71, 76–79 (GAVF), and Lys-134 contribute to the ATP site. Lys-134 contributes to the (R)-lipoate binding site.

This sequence belongs to the LplA family. As to quaternary structure, monomer.

It is found in the cytoplasm. It catalyses the reaction L-lysyl-[lipoyl-carrier protein] + (R)-lipoate + ATP = N(6)-[(R)-lipoyl]-L-lysyl-[lipoyl-carrier protein] + AMP + diphosphate + H(+). It functions in the pathway protein modification; protein lipoylation via exogenous pathway; protein N(6)-(lipoyl)lysine from lipoate: step 1/2. Its pathway is protein modification; protein lipoylation via exogenous pathway; protein N(6)-(lipoyl)lysine from lipoate: step 2/2. Functionally, catalyzes both the ATP-dependent activation of exogenously supplied lipoate to lipoyl-AMP and the transfer of the activated lipoyl onto the lipoyl domains of lipoate-dependent enzymes. The chain is Lipoate-protein ligase A from Salmonella paratyphi B (strain ATCC BAA-1250 / SPB7).